The primary structure comprises 706 residues: Fatty acid oxidation complex subunit alpha (706 aa).

The segment at 1–188 (MEKTFSLSRR…KMGLVDDVVP (188 aa)) is enoyl-CoA hydratase. The interval 308 to 706 (RKVAKAVVLG…AMAAEGKTFY (399 aa)) is 3-hydroxyacyl-CoA dehydrogenase.

This sequence in the N-terminal section; belongs to the enoyl-CoA hydratase/isomerase family. It in the central section; belongs to the 3-hydroxyacyl-CoA dehydrogenase family. As to quaternary structure, heterotetramer of two alpha chains (FadJ) and two beta chains (FadI).

The protein localises to the cytoplasm. It catalyses the reaction a (3S)-3-hydroxyacyl-CoA = a (2E)-enoyl-CoA + H2O. The enzyme catalyses a 4-saturated-(3S)-3-hydroxyacyl-CoA = a (3E)-enoyl-CoA + H2O. The catalysed reaction is a (3S)-3-hydroxyacyl-CoA + NAD(+) = a 3-oxoacyl-CoA + NADH + H(+). It carries out the reaction (3S)-3-hydroxybutanoyl-CoA = (3R)-3-hydroxybutanoyl-CoA. Its pathway is lipid metabolism; fatty acid beta-oxidation. Functionally, catalyzes the formation of a hydroxyacyl-CoA by addition of water on enoyl-CoA. Also exhibits 3-hydroxyacyl-CoA epimerase and 3-hydroxyacyl-CoA dehydrogenase activities. This is Fatty acid oxidation complex subunit alpha from Shewanella amazonensis (strain ATCC BAA-1098 / SB2B).